We begin with the raw amino-acid sequence, 266 residues long: MLVFKRGIHVVPKLPNSKALLQNGVPNILSSSGFKTVWFDYQRYLCDKLTLATAGQSLESYYPFHILLKTAGNPLQSNIFNLASSIHNNHLFVENILPSAVEHGTNSNAVVKTEPSRLFLSKIKDSFNGSDWEVVKEEMIYRAENEVLGQGWLFLVENNEKKLFILTSNNNGTPYYFPRNQSFDLNSAISIDEFATLKQMKELIGKSTKLNGKVQDWTMPIICVNLWDHAYLHDYGVGNRSKYVKNVLDNLNWSVVNNRIFSGISK.

It belongs to the mitochondrion-specific ribosomal protein mS42 family. As to quaternary structure, component of the mitochondrial small ribosomal subunit (mt-SSU). Mature yeast 74S mitochondrial ribosomes consist of a small (37S) and a large (54S) subunit. The 37S small subunit contains a 15S ribosomal RNA (15S mt-rRNA) and 34 different proteins. The 54S large subunit contains a 21S rRNA (21S mt-rRNA) and 46 different proteins. mS42 forms a heterodimer with mS43, building a large protuberance adjacent to the mRNA channel exit in the mt-SSU body.

The protein resides in the mitochondrion. Its function is as follows. Component of the mitochondrial ribosome (mitoribosome), a dedicated translation machinery responsible for the synthesis of mitochondrial genome-encoded proteins, including at least some of the essential transmembrane subunits of the mitochondrial respiratory chain. The mitoribosomes are attached to the mitochondrial inner membrane and translation products are cotranslationally integrated into the membrane. The chain is Small ribosomal subunit protein mS42 (RSM26) from Saccharomyces cerevisiae (strain ATCC 204508 / S288c) (Baker's yeast).